Reading from the N-terminus, the 116-residue chain is Nucleoid-associated protein P9515_00191 (116 aa).

Basic and acidic residues predominate over residues 89–98 (STTTMKERMN). The disordered stretch occupies residues 89 to 116 (STTTMKERMNDLTGGLNLNLPGLDNNDS). The segment covering 99–116 (DLTGGLNLNLPGLDNNDS) has biased composition (low complexity).

The protein belongs to the YbaB/EbfC family. In terms of assembly, homodimer.

Its subcellular location is the cytoplasm. The protein resides in the nucleoid. In terms of biological role, binds to DNA and alters its conformation. May be involved in regulation of gene expression, nucleoid organization and DNA protection. The sequence is that of Nucleoid-associated protein P9515_00191 from Prochlorococcus marinus (strain MIT 9515).